A 549-amino-acid chain; its full sequence is Probable serine/threonine-protein kinase WNK5 (549 aa).

Positions G25–L283 constitute a Protein kinase domain. Residues T105–F108 and K155 each bind ATP. D172 acts as the Proton acceptor in catalysis. The interval E414–Q490 is disordered. The span at D452–D463 shows a compositional bias: acidic residues. The segment covering R467–S476 has biased composition (low complexity). S504 carries the phosphoserine modification. The segment at R525–C549 is disordered. Positions P531–C549 are enriched in polar residues.

Belongs to the protein kinase superfamily. Ser/Thr protein kinase family. WNK subfamily. As to quaternary structure, interacts with AHK4.

The enzyme catalyses L-seryl-[protein] + ATP = O-phospho-L-seryl-[protein] + ADP + H(+). It carries out the reaction L-threonyl-[protein] + ATP = O-phospho-L-threonyl-[protein] + ADP + H(+). Functionally, regulates flowering time by modulating the photoperiod pathway. This is Probable serine/threonine-protein kinase WNK5 (WNK5) from Arabidopsis thaliana (Mouse-ear cress).